Consider the following 383-residue polypeptide: 8-amino-7-oxononanoate synthase (383 aa).

Arg-21 lines the substrate pocket. A pyridoxal 5'-phosphate-binding site is contributed by 108–109 (GY). His-133 contributes to the substrate binding site. Residues Ser-179, His-207, and Thr-233 each coordinate pyridoxal 5'-phosphate. Lys-236 carries the post-translational modification N6-(pyridoxal phosphate)lysine. Thr-350 contributes to the substrate binding site.

The protein belongs to the class-II pyridoxal-phosphate-dependent aminotransferase family. BioF subfamily. Homodimer. Pyridoxal 5'-phosphate is required as a cofactor.

It carries out the reaction 6-carboxyhexanoyl-[ACP] + L-alanine + H(+) = (8S)-8-amino-7-oxononanoate + holo-[ACP] + CO2. The protein operates within cofactor biosynthesis; biotin biosynthesis. Catalyzes the decarboxylative condensation of pimeloyl-[acyl-carrier protein] and L-alanine to produce 8-amino-7-oxononanoate (AON), [acyl-carrier protein], and carbon dioxide. This chain is 8-amino-7-oxononanoate synthase, found in Yersinia pseudotuberculosis serotype O:1b (strain IP 31758).